The following is a 208-amino-acid chain: Redox-sensing transcriptional repressor Rex (208 aa).

The segment at residues 16–55 is a DNA-binding region (H-T-H motif); it reads LYYRCLSELNEKGEDKVSSAVLERLLKIDAATVRRDFSYF. An NAD(+)-binding site is contributed by 90–95; that stretch reads GVGNLG.

This sequence belongs to the transcriptional regulatory Rex family. Homodimer.

The protein resides in the cytoplasm. Modulates transcription in response to changes in cellular NADH/NAD(+) redox state. This Pediococcus pentosaceus (strain ATCC 25745 / CCUG 21536 / LMG 10740 / 183-1w) protein is Redox-sensing transcriptional repressor Rex.